A 149-amino-acid chain; its full sequence is Probable flagellum biosynthesis repressor protein FlbT (149 aa).

This sequence belongs to the FlbT family.

Functionally, has a post-transcriptional repressor function in flagellum biogenesis. Associates with the 5'-UTR of fljK mRNA and promotes its degradation. In Rhizobium etli (strain CIAT 652), this protein is Probable flagellum biosynthesis repressor protein FlbT.